Consider the following 332-residue polypeptide: MTTNSIRRIVVTAGEPAGIGPDLVLALSKEDWAHQIVVCADKNMLLERAKMLGIDVQLFDYNPEEAPKAQKAGTLIVDHVEIAENAIAGQLNEANGHYVLKTLERAALGCMNDEFDAIVTGPVHKGVINRAGVAFSGHTEFFAEKSNTPLVVMMLATEGLRVALVTTHIPLAYVSKAVTEERLEKIIDILHKDLVEKFAIAEPNIYVCGLNPHAGEDGCLGREEIETITPTLEKIQKEKGIKLIGPLPADTIFNEKYLNDADAVLGMYHDQVLPVLKYKGFGRSVNITLGLPFIRTSVDHGTALELAGTGQADTGSFRTALTHAIELVEKKQ.

Residues His-138 and Thr-139 each contribute to the substrate site. A divalent metal cation-binding residues include His-168, His-213, and His-269. Substrate contacts are provided by Lys-277, Asn-286, and Arg-295.

This sequence belongs to the PdxA family. As to quaternary structure, homodimer. Requires Zn(2+) as cofactor. It depends on Mg(2+) as a cofactor. Co(2+) serves as cofactor.

It localises to the cytoplasm. It carries out the reaction 4-(phosphooxy)-L-threonine + NAD(+) = 3-amino-2-oxopropyl phosphate + CO2 + NADH. The protein operates within cofactor biosynthesis; pyridoxine 5'-phosphate biosynthesis; pyridoxine 5'-phosphate from D-erythrose 4-phosphate: step 4/5. In terms of biological role, catalyzes the NAD(P)-dependent oxidation of 4-(phosphooxy)-L-threonine (HTP) into 2-amino-3-oxo-4-(phosphooxy)butyric acid which spontaneously decarboxylates to form 3-amino-2-oxopropyl phosphate (AHAP). This Vibrio parahaemolyticus serotype O3:K6 (strain RIMD 2210633) protein is 4-hydroxythreonine-4-phosphate dehydrogenase.